The primary structure comprises 168 residues: Cell division inhibitor SulA (168 aa).

Residues 105 to 111 (ALQTGNY) are ftsZ binding.

This sequence belongs to the SulA family. As to quaternary structure, interacts with FtsZ. Post-translationally, is rapidly cleaved and degraded by the Lon protease once DNA damage is repaired.

Functionally, component of the SOS system and an inhibitor of cell division. Accumulation of SulA causes rapid cessation of cell division and the appearance of long, non-septate filaments. In the presence of GTP, binds a polymerization-competent form of FtsZ in a 1:1 ratio, thus inhibiting FtsZ polymerization and therefore preventing it from participating in the assembly of the Z ring. This mechanism prevents the premature segregation of damaged DNA to daughter cells during cell division. The sequence is that of Cell division inhibitor SulA from Erwinia pyrifoliae (strain DSM 12163 / CIP 106111 / Ep16/96).